The following is a 409-amino-acid chain: DEP domain-containing mTOR-interacting protein (409 aa).

Met-1 is subject to N-acetylmethionine. The disordered stretch occupies residues 1–25; it reads MEEGGSTGSAGSDSSTSGSGGAQQR. DEP domains follow at residues 36–119 and 145–219; these read TGEQ…RFRK and SPEN…QFRM. Residues 217 to 235 carry the DDEX motif motif; sequence FRMNFRRRRRLMELLNEKS. Ser-235 is subject to Phosphoserine; by MAPK3. Thr-241 bears the Phosphothreonine mark. Ser-244 and Ser-258 each carry phosphoserine. Phosphothreonine is present on Thr-259. 5 positions are modified to phosphoserine: Ser-263, Ser-265, Ser-280, Ser-282, and Ser-283. Phosphoserine; by CK1 occurs at positions 286 and 287. Positions 286-291 match the BetaTrCP degron motif motif; that stretch reads SSGYFS. Residue Tyr-289 is modified to Phosphotyrosine; by SYK. Ser-291 carries the phosphoserine; by CK1 modification. Ser-293 bears the Phosphoserine; by MTOR mark. Thr-295 carries the post-translational modification Phosphothreonine; by MTOR. Phosphoserine occurs at positions 297 and 298. Ser-299 is subject to Phosphoserine; by MTOR. Residues 330-407 form the PDZ domain; it reads TFTIVGDAVG…TIVMEVMEEL (78 aa).

In terms of assembly, associated component of the mechanistic target of rapamycin complex 1 (mTORC1) which contains MTOR, MLST8 and RPTOR. Associated component of the mechanistic target of rapamycin complex 2 (mTORC2) which contains MTOR, MLST8, PROTOR1, RICTOR, MAPKAP1 and DEPTOR. Interacts (via PDZ domain) with MTOR; interacts with MTOR within both mTORC1 and mTORC2. Interacts (via PDZ domain) with MINAR1 (via N-terminus). Interacts with SIK3. Phosphorylation weakens interaction with MTOR within mTORC1 and mTORC2. Phosphorylated at Ser-286, Ser-287 and Ser-291 in response to mitogenic stimulation by MTOR: DEPTOR is either directly phosphorylated by MTOR or indirectly via proteins kinases that are activated by MTOR, such as CK1/CSNK1A1. Phosphorylation at Ser-286, Ser-287 and Ser-291 promotes ubiquitination by the SCF(BTRC) complex, followed by degradation. Phosphorylation at Ser-235 by MAPK3/ERK1 promotes deubiquitination by USP7, enhancing its stability. Phosphorylation at Tyr-289 by SYK impairs its interaction with MTOR, promoting mTORC1 and mTORC2 signaling. In terms of processing, ubiquitinated; leading to proteasomal degradation. Ubiquitination by the SCF(BTRC) and SCF(FBXW11) complexes following phosphorylation at Ser-286, Ser-287 and Ser-291 by MTOR, leads to its degradation by the proteasome. Deubiquitinated by OTUB1 in response to amino acid via a non-canonical mechanism, leading to DEPTOR stability. Deubiquitinated by USP7 following phosphorylation at Ser-235, promoting its stability.

It localises to the lysosome membrane. Its activity is regulated as follows. Inhibited upon phosphatidic acid-binding: phosphatidic acid produced upon mitogenic stimulation promotes DEPTOR dissociatiom from the mTORC1 and mTORC2 complexes, leading to their activation. Specifically binds unsaturated phosphatidic acid, such as 16:0-18:1, 18:0-18:1 and di-18:1. Inhibited when nutrients are present via a feedback loop: phosphorylation by MTOR promotes DEPTOR ubiquitination and degradation. Functionally, negative regulator of the mTORC1 and mTORC2 complexes: inhibits the protein kinase activity of MTOR, thereby inactivating both complexes. DEPTOR inhibits mTORC1 and mTORC2 to induce autophagy. In contrast to AKT1S1/PRAS40, only partially inhibits mTORC1 activity. This chain is DEP domain-containing mTOR-interacting protein, found in Homo sapiens (Human).